Consider the following 105-residue polypeptide: Nucleoid-associated protein Sca_0120 (105 aa).

Residues 1-36 (MRGGGNMQQMMKQMQKMQKKMAEEQEKLKDEKVEGS) are disordered. Residues 7–16 (MQQMMKQMQK) show a composition bias toward low complexity. Over residues 20-34 (KMAEEQEKLKDEKVE) the composition is skewed to basic and acidic residues.

The protein belongs to the YbaB/EbfC family. In terms of assembly, homodimer.

It is found in the cytoplasm. The protein localises to the nucleoid. In terms of biological role, binds to DNA and alters its conformation. May be involved in regulation of gene expression, nucleoid organization and DNA protection. The polypeptide is Nucleoid-associated protein Sca_0120 (Staphylococcus carnosus (strain TM300)).